Consider the following 213-residue polypeptide: Reticulon-3 (213 aa).

A compositionally biased stretch (polar residues) spans 1–16 (MADTSGPQSSHISSSA). The segment at 1–20 (MADTSGPQSSHISSSAGEKG) is disordered. Residues 25–213 (VQDLLYWRDV…LPGALKKKSE (189 aa)) form the Reticulon domain. The next 2 helical transmembrane spans lie at 45-65 (MVLL…YLVL) and 154-174 (VFNG…APIV).

In terms of assembly, homodimer.

It is found in the endoplasmic reticulum membrane. It localises to the golgi apparatus membrane. In terms of biological role, may be involved in membrane trafficking in the early secretory pathway. The protein is Reticulon-3 (rtn3) of Xenopus tropicalis (Western clawed frog).